Consider the following 179-residue polypeptide: Peptide deformylase (179 aa).

C102 and H144 together coordinate Fe cation. E145 is a catalytic residue. H148 contacts Fe cation.

This sequence belongs to the polypeptide deformylase family. Fe(2+) serves as cofactor.

The enzyme catalyses N-terminal N-formyl-L-methionyl-[peptide] + H2O = N-terminal L-methionyl-[peptide] + formate. Its function is as follows. Removes the formyl group from the N-terminal Met of newly synthesized proteins. Requires at least a dipeptide for an efficient rate of reaction. N-terminal L-methionine is a prerequisite for activity but the enzyme has broad specificity at other positions. The polypeptide is Peptide deformylase (Wolbachia sp. subsp. Drosophila simulans (strain wRi)).